The chain runs to 410 residues: Metal tolerance protein 3 (410 aa).

The segment at 1–58 (MDGDDRRTPLLGGEGGSTRPPSLRRRDSARSLRSTFLSRLPDKVRGGGDPERPAADVD) is disordered. The Cytoplasmic segment spans residues 1-114 (MDGDDRRTPL…EDKEQKQSES (114 aa)). Over residues 40–58 (LPDKVRGGGDPERPAADVD) the composition is skewed to basic and acidic residues. A helical membrane pass occupies residues 115–135 (AMKISNYANIILLVFKVYATI). The Vacuolar portion of the chain corresponds to 136 to 140 (KTGSM). Residues 141 to 161 (AIAASTLDSLLDFLAGGILYF) traverse the membrane as a helical segment. Residues 162-184 (THLTMKSVNIYKYPIGKLRVQPV) are Cytoplasmic-facing. The chain crosses the membrane as a helical span at residues 185–205 (GIIVFAAIMATLGFQVLIQAI). Residues 206-221 (EQLVENKAGEKMTPEQ) are Vacuolar-facing. The chain crosses the membrane as a helical span at residues 222 to 242 (LIWLYSIMLSATVVKLALYIY). At 243 to 258 (CRSSGNSIVQAYAKDH) the chain is on the cytoplasmic side. A helical transmembrane segment spans residues 259 to 275 (YFDVVTNVVGLVAAVLG). Over 276–284 (DKFFWWIDP) the chain is Vacuolar. The chain crosses the membrane as a helical span at residues 285–303 (VGAVLLAVYTIVNWSGTVY). The Cytoplasmic segment spans residues 304 to 410 (ENAVTLVGQC…VRSRLPSTEP (107 aa)).

It belongs to the cation diffusion facilitator (CDF) transporter (TC 2.A.4) family. SLC30A subfamily.

It is found in the vacuole membrane. Involved in sequestration of excess metal in the cytoplasm into vacuoles to maintain metal homeostasis. In Oryza sativa subsp. japonica (Rice), this protein is Metal tolerance protein 3 (MTP3).